Here is a 324-residue protein sequence, read N- to C-terminus: tRNA dimethylallyltransferase (324 aa).

17–24 (GPTASGKT) contacts ATP. 19 to 24 (TASGKT) is a binding site for substrate. Interaction with substrate tRNA regions lie at residues 42–45 (DSAL), 166–170 (QRIQR), 251–256 (RCVGYR), and 284–291 (KRQITWLR).

This sequence belongs to the IPP transferase family. As to quaternary structure, monomer. It depends on Mg(2+) as a cofactor.

The catalysed reaction is adenosine(37) in tRNA + dimethylallyl diphosphate = N(6)-dimethylallyladenosine(37) in tRNA + diphosphate. Catalyzes the transfer of a dimethylallyl group onto the adenine at position 37 in tRNAs that read codons beginning with uridine, leading to the formation of N6-(dimethylallyl)adenosine (i(6)A). The sequence is that of tRNA dimethylallyltransferase from Burkholderia vietnamiensis (strain G4 / LMG 22486) (Burkholderia cepacia (strain R1808)).